The sequence spans 132 residues: Histone H2B.2 (132 aa).

A compositionally biased stretch (basic and acidic residues) spans Met1–Pro19. The disordered stretch occupies residues Met1 to Lys39. 2 positions are modified to N6-acetyllysine; alternate: Lys7 and Lys8. Residues Lys7 and Lys8 each participate in a glycyl lysine isopeptide (Lys-Gly) (interchain with G-Cter in SUMO); alternate cross-link. At Ser11 the chain carries Phosphoserine. Lys12 is subject to N6-acetyllysine. Lys17 bears the N6-acetyllysine; alternate mark. Lys17 participates in a covalent cross-link: Glycyl lysine isopeptide (Lys-Gly) (interchain with G-Cter in SUMO); alternate. A Glycyl lysine isopeptide (Lys-Gly) (interchain with G-Cter in SUMO) cross-link involves residue Lys18. Lys125 participates in a covalent cross-link: Glycyl lysine isopeptide (Lys-Gly) (interchain with G-Cter in ubiquitin).

This sequence belongs to the histone H2B family. In terms of assembly, the nucleosome is a histone octamer containing two molecules each of H2A, H2B, H3 and H4 assembled in one H3-H4 heterotetramer and two H2A-H2B heterodimers. The octamer wraps approximately 147 bp of DNA. Post-translationally, monoubiquitinated by the UBC2-BRE1 complex to form H2BK123ub1. H2BK123ub1 gives a specific tag for epigenetic transcriptional activation and is also prerequisite for H3K4me and H3K79me formation. H2BK123ub1 also modulates the formation of double-strand breaks during meiosis and is a prerequisite for DNA-damage checkpoint activation. In terms of processing, phosphorylated by STE20 to form H2BS10ph during progression through meiotic prophase. May be correlated with chromosome condensation. Acetylated by GCN5 to form H2BK11ac and H2BK16ac. H2BK16ac can also be formed by ESA1. Acetylation of N-terminal lysines and particularly formation of H2BK11acK16ac has a positive effect on transcription. Post-translationally, sumoylation to form H2BK6su or H2BK7su, and probably also H2BK16su or H2BK17su, occurs preferentially near the telomeres and represses gene transcription.

The protein localises to the nucleus. Its subcellular location is the chromosome. Core component of nucleosome. Nucleosomes wrap and compact DNA into chromatin, limiting DNA accessibility to the cellular machineries which require DNA as a template. Histones thereby play a central role in transcription regulation, DNA repair, DNA replication and chromosomal stability. DNA accessibility is regulated via a complex set of post-translational modifications of histones, also called histone code, and nucleosome remodeling. The protein is Histone H2B.2 (HTB1) of Kluyveromyces lactis (strain ATCC 8585 / CBS 2359 / DSM 70799 / NBRC 1267 / NRRL Y-1140 / WM37) (Yeast).